We begin with the raw amino-acid sequence, 591 residues long: 2-succinyl-5-enolpyruvyl-6-hydroxy-3-cyclohexene-1-carboxylate synthase (591 aa).

This sequence belongs to the TPP enzyme family. MenD subfamily. In terms of assembly, homodimer. It depends on Mg(2+) as a cofactor. Requires Mn(2+) as cofactor. Thiamine diphosphate serves as cofactor.

It catalyses the reaction isochorismate + 2-oxoglutarate + H(+) = 5-enolpyruvoyl-6-hydroxy-2-succinyl-cyclohex-3-ene-1-carboxylate + CO2. The protein operates within quinol/quinone metabolism; 1,4-dihydroxy-2-naphthoate biosynthesis; 1,4-dihydroxy-2-naphthoate from chorismate: step 2/7. Its pathway is quinol/quinone metabolism; menaquinone biosynthesis. Its function is as follows. Catalyzes the thiamine diphosphate-dependent decarboxylation of 2-oxoglutarate and the subsequent addition of the resulting succinic semialdehyde-thiamine pyrophosphate anion to isochorismate to yield 2-succinyl-5-enolpyruvyl-6-hydroxy-3-cyclohexene-1-carboxylate (SEPHCHC). The chain is 2-succinyl-5-enolpyruvyl-6-hydroxy-3-cyclohexene-1-carboxylate synthase from Salinibacter ruber (strain DSM 13855 / M31).